Reading from the N-terminus, the 157-residue chain is SsrA-binding protein (157 aa).

Belongs to the SmpB family.

It localises to the cytoplasm. Functionally, required for rescue of stalled ribosomes mediated by trans-translation. Binds to transfer-messenger RNA (tmRNA), required for stable association of tmRNA with ribosomes. tmRNA and SmpB together mimic tRNA shape, replacing the anticodon stem-loop with SmpB. tmRNA is encoded by the ssrA gene; the 2 termini fold to resemble tRNA(Ala) and it encodes a 'tag peptide', a short internal open reading frame. During trans-translation Ala-aminoacylated tmRNA acts like a tRNA, entering the A-site of stalled ribosomes, displacing the stalled mRNA. The ribosome then switches to translate the ORF on the tmRNA; the nascent peptide is terminated with the 'tag peptide' encoded by the tmRNA and targeted for degradation. The ribosome is freed to recommence translation, which seems to be the essential function of trans-translation. The sequence is that of SsrA-binding protein from Lacticaseibacillus paracasei (strain ATCC 334 / BCRC 17002 / CCUG 31169 / CIP 107868 / KCTC 3260 / NRRL B-441) (Lactobacillus paracasei).